The chain runs to 722 residues: MTEETGNDFQMVQGYEIVPSNEEAHAEEVQGDELVLAEDLAQGDEVQVNGLVSAEMSTPPTSRRRRKKSLVWEHFTIEAVSGGATRACCKLCKQTFAYSSGSKIAGTSHLKRHITLGSCPIIKNQEHKLALTPAVGTDNDGEGTVERPSKRRYRYTGYANAAFDQDRSCSYLAKMIILHDYPLHIVQQPAFTTFIDSLQPRFRVVDVETMEGEVYAVYQKEKENLMQAFSTMPGRISLTIGLWTTSQTLGYVSLAGQFIDSEWKIHRRMLNFMMVSSPHSENALSEAISTSLSDWNMKDKLFTITLDNDCSSHDIYSANLRDYLSNKNNLMLKGQLFVVRCYAHILNAVAQDVIASIHGVIYNIRESIKFIKASPSREEKFAEIALQLEIPSTKTLCLDVTTQWNTTYLMLLAALDYKQAFSTLETSDDNYNEAPSAEDWKKVEAACNYLKLLYDSAHSIMAAANPTSNLFFHEAWKLQLELSNATGHEDPVFSSIAKDMHERFDKYWKDCNLVLAIAVVMDPRFKMKLVEFSYSKIYGVEAAKYVKVVDDAVHELYKEYVAQPLPLTPAYVEQGDGNNAPASENGTQATAPSTGDGLVDFDMYLSEIATSQPTKSELEQYLDESLTPRIQEFDILNWWKLNTLKFPTLSRMARDILAIPMSMVSSGNSIFSAGTGTRMLDDYRSSLRPEIVEALVCAKDWLQYLPATPEAPSTTLVKVDAP.

The BED-type zinc finger occupies 66–134; the sequence is RKKSLVWEHF…QEHKLALTPA (69 aa). Residues C89, C92, H113, and H127 each contribute to the Zn(2+) site. Residues 572–592 form a disordered region; sequence VEQGDGNNAPASENGTQATAP. Over residues 576–592 the composition is skewed to polar residues; it reads DGNNAPASENGTQATAP. The segment at 617–702 is HATC (Hobo-Ac-Tam3) domain; it reads ELEQYLDESL…EALVCAKDWL (86 aa).

Homodimer.

Its subcellular location is the nucleus. In terms of biological role, transposase-like protein that is essential for plant growth and development. May regulate global gene expression by recruiting other cellular factors. In Oryza sativa subsp. japonica (Rice), this protein is Zinc finger BED domain-containing protein RICESLEEPER 2.